The primary structure comprises 607 residues: ATP-dependent RNA helicase-like protein DB10 (607 aa).

Polar residues predominate over residues 1–10 (MAVVTASSAG). Disordered stretches follow at residues 1–25 (MAVVTASSAGPSYAPEDPTLPKPWK) and 66–108 (VFVS…DGTS). Residues 18-52 (PTLPKPWKGLVDGTTGFIYFWNPETNDTQYERPVP) enclose the WW domain. The span at 89–98 (RGSNNKIARS) shows a compositional bias: polar residues. The segment covering 99 to 108 (SSDRFHDGTS) has biased composition (basic and acidic residues). Positions 145 to 173 (TSFEATGFPSEIVREMHQAGFSAPTPIQA) match the Q motif motif. Residues 176–350 (WPIALQGRDI…ADLLVNSVQV (175 aa)) enclose the Helicase ATP-binding domain. 189–196 (AKTGSGKT) provides a ligand contact to ATP. The short motif at 298–301 (DEAD) is the DEAD box element. Positions 379 to 523 (RVEQILRSKE…CVPTELRDMA (145 aa)) constitute a Helicase C-terminal domain. Residues 519-607 (LRDMASRGGG…WSGKKSRFTD (89 aa)) form a disordered region. Over residues 538–548 (SGPGGRGGRGG) the composition is skewed to gly residues. Residues 562–574 (GYDRGSRDSDRYG) show a composition bias toward basic and acidic residues.

Belongs to the DEAD box helicase family.

It carries out the reaction ATP + H2O = ADP + phosphate + H(+). This chain is ATP-dependent RNA helicase-like protein DB10, found in Nicotiana sylvestris (Wood tobacco).